The following is a 115-amino-acid chain: Large ribosomal subunit protein bL19 (115 aa).

This sequence belongs to the bacterial ribosomal protein bL19 family.

In terms of biological role, this protein is located at the 30S-50S ribosomal subunit interface and may play a role in the structure and function of the aminoacyl-tRNA binding site. The chain is Large ribosomal subunit protein bL19 from Tropheryma whipplei (strain TW08/27) (Whipple's bacillus).